The primary structure comprises 196 residues: MSYYAFEGLIPVVHPTAFVHPSAVLIGDVIVGAGVYIGPLASLRGDYGRLIVQAGANIQDGCIMHGYCDTDTIVGENGHIGHGAILHGCVIGRDALVGMNSVIMDGAVIGEESIVAAMSFVKAGFRGEKRQLLMGTPARAVRSVSDDELHWKRLNTKEYQDLVGRCHAALHETQPLRQMEENRPRLQGTTDVTPKR.

Residues 173–196 (TQPLRQMEENRPRLQGTTDVTPKR) form a disordered region. Over residues 187–196 (QGTTDVTPKR) the composition is skewed to polar residues.

It belongs to the transferase hexapeptide repeat family.

Its pathway is amine and polyamine metabolism; carnitine metabolism. Its function is as follows. Overproduction of CaiE stimulates the activity of CaiB and CaiD. The protein is Carnitine operon protein CaiE of Escherichia coli O6:K15:H31 (strain 536 / UPEC).